Reading from the N-terminus, the 279-residue chain is Ribosome maturation factor RimP (279 aa).

Residues Leu-197–Lys-279 are disordered. The segment covering Glu-199–Gly-210 has biased composition (acidic residues).

This sequence belongs to the RimP family.

Its subcellular location is the cytoplasm. Functionally, required for maturation of 30S ribosomal subunits. The protein is Ribosome maturation factor RimP of Methylocella silvestris (strain DSM 15510 / CIP 108128 / LMG 27833 / NCIMB 13906 / BL2).